The following is a 281-amino-acid chain: Acetyl-coenzyme A carboxylase carboxyl transferase subunit beta 2 (281 aa).

The CoA carboxyltransferase N-terminal domain occupies 26–281; sequence LLTRCPVCHE…TITQGGHQDV (256 aa). 4 residues coordinate Zn(2+): Cys30, Cys33, Cys48, and Cys51. A C4-type zinc finger spans residues 30-51; sequence CPVCHEDCYTQDLGEFKVCPHC.

Belongs to the AccD/PCCB family. As to quaternary structure, acetyl-CoA carboxylase is a heterohexamer composed of biotin carboxyl carrier protein (AccB), biotin carboxylase (AccC) and two subunits each of ACCase subunit alpha (AccA) and ACCase subunit beta (AccD). Zn(2+) is required as a cofactor.

It is found in the cytoplasm. It carries out the reaction N(6)-carboxybiotinyl-L-lysyl-[protein] + acetyl-CoA = N(6)-biotinyl-L-lysyl-[protein] + malonyl-CoA. It participates in lipid metabolism; malonyl-CoA biosynthesis; malonyl-CoA from acetyl-CoA: step 1/1. Its function is as follows. Component of the acetyl coenzyme A carboxylase (ACC) complex. Biotin carboxylase (BC) catalyzes the carboxylation of biotin on its carrier protein (BCCP) and then the CO(2) group is transferred by the transcarboxylase to acetyl-CoA to form malonyl-CoA. The chain is Acetyl-coenzyme A carboxylase carboxyl transferase subunit beta 2 from Lactiplantibacillus plantarum (strain JDM1) (Lactobacillus plantarum).